A 124-amino-acid polypeptide reads, in one-letter code: Testis-expressed protein 54 (124 aa).

The segment covering 1 to 10 (MGCCQDKDFE) has biased composition (basic and acidic residues). 2 disordered regions span residues 1–77 (MGCC…SNES) and 90–124 (FGRR…PEKG). Over residues 11-30 (MSDEQSKEEESEDGREDETT) the composition is skewed to acidic residues. 2 stretches are compositionally biased toward basic and acidic residues: residues 34-50 (RGPR…RGEL) and 101-124 (RQPD…PEKG).

In terms of tissue distribution, expressed in Testis.

The protein is Testis-expressed protein 54 of Homo sapiens (Human).